The chain runs to 613 residues: UvrABC system protein C (613 aa).

In terms of domain architecture, GIY-YIG spans 29–107 (DVAGVYKMLG…IKTLKPKYNI (79 aa)). One can recognise a UVR domain in the interval 217 to 252 (KELQRELFDSMRKFSDNLDYESAMVYRDRLQALKSI).

Belongs to the UvrC family. Interacts with UvrB in an incision complex.

Its subcellular location is the cytoplasm. Its function is as follows. The UvrABC repair system catalyzes the recognition and processing of DNA lesions. UvrC both incises the 5' and 3' sides of the lesion. The N-terminal half is responsible for the 3' incision and the C-terminal half is responsible for the 5' incision. This chain is UvrABC system protein C, found in Anaplasma marginale (strain St. Maries).